A 1361-amino-acid polypeptide reads, in one-letter code: MASFNIENPLQQLEQSGLAGVTLNDNAAPAANVIYSSLKSGGGGSTPPATTTSLGTIQLAGVLTGIATSPQLAAGSVGASQLAPGAVNASSIAPGSITGSSLAPGTITSTQLAPGSVGSSQIANGAVGSSQIANGAVGSSQIANGAVGASQIANGAIGPMQLAPLSGPSELIGSNSTSPNAMDITLGPSLQMSPAGVLSVNPSAVTVAPSTTTSLGTIQLAGVLTGTATSPQLAAGSVGASQLAPGAVTSSSIAPGSISGSSLAPGSVTSSQLAAGSVGTSQLAPLPAPSELLGSSSTSSAVTDIMLGSGLSMTGSVLSVNASTAVPPATSSSLGTVQLAGALTGSATAPSLAANSVGSSQISAGAVGATQLGANVVGNGQLAPLSGPSELIGSNSSSPAASNITLGTGLSMSSGGVLSVNASTAVPAATSSSLGTIQLAGALSGTATSPTLSAGSVGATQIVAGSVGATQLGANVVGNSQLAALSGPSELIGSASGSSDATNIILGSGLTMTGNTLNSTLGTIPIPVSQGGTGLTTIPSGSFLLGNGTSPVTTASSIPATMVTPNLVGSVNGVVPSSAGGNVAVVLGNVTTGVLSAQPAQPQPNGNIYVVSGDPTPANNGRTFISNGTTWNEVTNNIATTDARYVQLAGSTMNANANLVFPSTGHVTLNQTTFASTDAVTAQYVASQIASGSTPAATTTSLGTIQLAGSLTGTATSPSIASGVVTQTNMASNSIGSAQIIAGSVGATQLGANVVGTGQLAPLSANSELLGSNSSSPAATNITLGSGLSMTGSVLSVNASTAVPAATSSSLGTIQLAGALTGSATSPTLATGSVGATQIVAGSVGATQLGANVVGNGQLAPLSAPSELIGSNSASPNATNISLGSGLSMSSGGVLSVDASTAVPAATSSSLGTIQLSGALSGSATSPTLSAGSVGSTQIADGAVGASKIANGAVGATQIAANSVGTGQLAALSGTSQLIGSNSSSSAATNITLGTGLSMSSGGVLSATAIAPAPATSTSLGTIQLAGSLSGTATAPTIANNAIGTAQLANNAVETAQLANGAVGLSQLAPLPATSELIGSSSGSTTASAITLGSGLVMSAGGQLSVNLTGVSIPAATSSSLGGIQMLGDLTGSVATAPTVAPGAITLAKMANLSGNSQLIGSSKTSTTPTNITLGPSMSMTNSQLNGPISFLTSGNNPNTTAPSDRPAQQNTLYSGTDGSIWLYNGTNYVKINSGLTSTGSIVASLTNITFGNLVVQVGGIVNNANCSIFVMFNDSQTHQCTASLFSTYAANGSAQNIGNMYQPISGTFVGLQKVWGGGFLSQVGGMQTYVLIDQTFGKQWNISISAIASNSFFVSVLSVI.

Belongs to the IIV-6 261R/396L/443R family.

This is an uncharacterized protein from Invertebrate iridescent virus 6 (IIV-6).